The sequence spans 340 residues: Anthranilate phosphoribosyltransferase (340 aa).

5-phospho-alpha-D-ribose 1-diphosphate is bound by residues Gly78, Gly81–Asp82, Thr86, Asn88–Thr91, Lys106–Ser114, and Ser118. Gly78 contacts anthranilate. Ser90 is a Mg(2+) binding site. Asn109 is an anthranilate binding site. An anthranilate-binding site is contributed by Arg164. Residues Asp223 and Glu224 each coordinate Mg(2+).

This sequence belongs to the anthranilate phosphoribosyltransferase family. As to quaternary structure, homodimer. The cofactor is Mg(2+).

It catalyses the reaction N-(5-phospho-beta-D-ribosyl)anthranilate + diphosphate = 5-phospho-alpha-D-ribose 1-diphosphate + anthranilate. The protein operates within amino-acid biosynthesis; L-tryptophan biosynthesis; L-tryptophan from chorismate: step 2/5. Its function is as follows. Catalyzes the transfer of the phosphoribosyl group of 5-phosphorylribose-1-pyrophosphate (PRPP) to anthranilate to yield N-(5'-phosphoribosyl)-anthranilate (PRA). This is Anthranilate phosphoribosyltransferase from Bacillus pumilus (Bacillus mesentericus).